The sequence spans 589 residues: Glutamine--fructose-6-phosphate aminotransferase [isomerizing] (589 aa).

Cysteine 2 serves as the catalytic Nucleophile; for GATase activity. In terms of domain architecture, Glutamine amidotransferase type-2 spans 2–221 (CGIIGIVSLR…DDELGFITPE (220 aa)). SIS domains follow at residues 286-426 (VIEE…KMEK) and 445-579 (IGEE…PDKP). Residue lysine 584 is the For Fru-6P isomerization activity of the active site.

In terms of assembly, homodimer.

The protein resides in the cytoplasm. It catalyses the reaction D-fructose 6-phosphate + L-glutamine = D-glucosamine 6-phosphate + L-glutamate. Catalyzes the first step in hexosamine metabolism, converting fructose-6P into glucosamine-6P using glutamine as a nitrogen source. The polypeptide is Glutamine--fructose-6-phosphate aminotransferase [isomerizing] (Sulfurisphaera tokodaii (strain DSM 16993 / JCM 10545 / NBRC 100140 / 7) (Sulfolobus tokodaii)).